We begin with the raw amino-acid sequence, 353 residues long: Photosystem II protein D1 (353 aa).

T2 is subject to N-acetylthreonine. Residue T2 is modified to Phosphothreonine. Transmembrane regions (helical) follow at residues 29-46 (YIGW…TATS), 118-133 (HFLL…EWEL), and 142-156 (WIAV…AATA). H118 is a binding site for chlorophyll a. Y126 lines the pheophytin a pocket. Residues D170 and E189 each contribute to the [CaMn4O5] cluster site. The helical transmembrane segment at 197-218 (FHMLGVAGVFGGSLFSAMHGSL) threads the bilayer. H198 serves as a coordination point for chlorophyll a. Residues H215 and 264–265 (SF) contribute to the a quinone site. Fe cation is bound at residue H215. H272 lines the Fe cation pocket. Residues 274–288 (FLAAWPVVGIWFTAL) traverse the membrane as a helical segment. Positions 332, 333, 342, and 344 each coordinate [CaMn4O5] cluster. The propeptide occupies 345 to 353 (AIEAPSTNG).

Belongs to the reaction center PufL/M/PsbA/D family. PSII is composed of 1 copy each of membrane proteins PsbA, PsbB, PsbC, PsbD, PsbE, PsbF, PsbH, PsbI, PsbJ, PsbK, PsbL, PsbM, PsbT, PsbX, PsbY, PsbZ, Psb30/Ycf12, at least 3 peripheral proteins of the oxygen-evolving complex and a large number of cofactors. It forms dimeric complexes. Requires The D1/D2 heterodimer binds P680, chlorophylls that are the primary electron donor of PSII, and subsequent electron acceptors. It shares a non-heme iron and each subunit binds pheophytin, quinone, additional chlorophylls, carotenoids and lipids. D1 provides most of the ligands for the Mn4-Ca-O5 cluster of the oxygen-evolving complex (OEC). There is also a Cl(-1) ion associated with D1 and D2, which is required for oxygen evolution. The PSII complex binds additional chlorophylls, carotenoids and specific lipids. as cofactor. Tyr-161 forms a radical intermediate that is referred to as redox-active TyrZ, YZ or Y-Z. Post-translationally, C-terminally processed by CTPA; processing is essential to allow assembly of the oxygen-evolving complex and thus photosynthetic growth.

Its subcellular location is the plastid. It is found in the chloroplast thylakoid membrane. It catalyses the reaction 2 a plastoquinone + 4 hnu + 2 H2O = 2 a plastoquinol + O2. Functionally, photosystem II (PSII) is a light-driven water:plastoquinone oxidoreductase that uses light energy to abstract electrons from H(2)O, generating O(2) and a proton gradient subsequently used for ATP formation. It consists of a core antenna complex that captures photons, and an electron transfer chain that converts photonic excitation into a charge separation. The D1/D2 (PsbA/PsbD) reaction center heterodimer binds P680, the primary electron donor of PSII as well as several subsequent electron acceptors. The protein is Photosystem II protein D1 of Gossypium barbadense (Sea Island cotton).